A 559-amino-acid polypeptide reads, in one-letter code: Alkaline phosphatase PhoK (559 aa).

Positions 1–19 are cleaved as a signal peptide; that stretch reads MLKHVAAALLLATAMPVVA. 2 residues coordinate Zn(2+): aspartate 49 and threonine 89. Residue threonine 89 is the Phosphothreonine intermediate of the active site. An intrachain disulfide couples cysteine 90 to cysteine 126. Substrate is bound by residues asparagine 110 and 171 to 173; that span reads KDR. Cysteine 231 and cysteine 314 form a disulfide bridge. The Zn(2+) site is built by aspartate 300, histidine 304, aspartate 345, histidine 346, and histidine 491. Cysteine 545 and cysteine 556 are oxidised to a cystine.

As to quaternary structure, monomer. Zn(2+) serves as cofactor.

Its subcellular location is the secreted. The enzyme catalyses a phosphate monoester + H2O = an alcohol + phosphate. In terms of biological role, alkaline phosphatase with broad substrate specificity. Precipitates uranium from alkaline solutions. The polypeptide is Alkaline phosphatase PhoK (Sphingomonas sp).